Reading from the N-terminus, the 353-residue chain is Thiamine-phosphate synthase (353 aa).

The interval Met-1–Ala-128 is unknown. Residues Leu-129–Thr-353 are thiamine-phosphate synthase. Residues Gln-185–Lys-189 and Asn-217 each bind 4-amino-2-methyl-5-(diphosphooxymethyl)pyrimidine. Mg(2+) contacts are provided by Asp-218 and Asp-237. Ser-256 contributes to the 4-amino-2-methyl-5-(diphosphooxymethyl)pyrimidine binding site. Thr-282 to Thr-284 lines the 2-[(2R,5Z)-2-carboxy-4-methylthiazol-5(2H)-ylidene]ethyl phosphate pocket. Lys-285 provides a ligand contact to 4-amino-2-methyl-5-(diphosphooxymethyl)pyrimidine. 2-[(2R,5Z)-2-carboxy-4-methylthiazol-5(2H)-ylidene]ethyl phosphate-binding positions include Gly-312 and Val-332–Ser-333.

It belongs to the thiamine-phosphate synthase family. Mg(2+) is required as a cofactor.

The enzyme catalyses 2-[(2R,5Z)-2-carboxy-4-methylthiazol-5(2H)-ylidene]ethyl phosphate + 4-amino-2-methyl-5-(diphosphooxymethyl)pyrimidine + 2 H(+) = thiamine phosphate + CO2 + diphosphate. The catalysed reaction is 2-(2-carboxy-4-methylthiazol-5-yl)ethyl phosphate + 4-amino-2-methyl-5-(diphosphooxymethyl)pyrimidine + 2 H(+) = thiamine phosphate + CO2 + diphosphate. It carries out the reaction 4-methyl-5-(2-phosphooxyethyl)-thiazole + 4-amino-2-methyl-5-(diphosphooxymethyl)pyrimidine + H(+) = thiamine phosphate + diphosphate. The protein operates within cofactor biosynthesis; thiamine diphosphate biosynthesis; thiamine phosphate from 4-amino-2-methyl-5-diphosphomethylpyrimidine and 4-methyl-5-(2-phosphoethyl)-thiazole: step 1/1. Functionally, condenses 4-methyl-5-(beta-hydroxyethyl)thiazole monophosphate (THZ-P) and 2-methyl-4-amino-5-hydroxymethyl pyrimidine pyrophosphate (HMP-PP) to form thiamine monophosphate (TMP). The protein is Thiamine-phosphate synthase of Synechococcus sp. (strain WH7803).